Consider the following 523-residue polypeptide: ATP synthase subunit alpha (523 aa).

179 to 186 (GDRQTGKT) is a binding site for ATP.

The protein belongs to the ATPase alpha/beta chains family. In terms of assembly, F-type ATPases have 2 components, CF(1) - the catalytic core - and CF(0) - the membrane proton channel. CF(1) has five subunits: alpha(3), beta(3), gamma(1), delta(1), epsilon(1). CF(0) has three main subunits: a(1), b(2) and c(9-12). The alpha and beta chains form an alternating ring which encloses part of the gamma chain. CF(1) is attached to CF(0) by a central stalk formed by the gamma and epsilon chains, while a peripheral stalk is formed by the delta and b chains.

It is found in the cell inner membrane. It catalyses the reaction ATP + H2O + 4 H(+)(in) = ADP + phosphate + 5 H(+)(out). Produces ATP from ADP in the presence of a proton gradient across the membrane. The alpha chain is a regulatory subunit. This Vibrio vulnificus (strain YJ016) protein is ATP synthase subunit alpha.